The following is a 96-amino-acid chain: Co-chaperonin GroES (96 aa).

Belongs to the GroES chaperonin family. As to quaternary structure, heptamer of 7 subunits arranged in a ring. Interacts with the chaperonin GroEL.

Its subcellular location is the cytoplasm. Its function is as follows. Together with the chaperonin GroEL, plays an essential role in assisting protein folding. The GroEL-GroES system forms a nano-cage that allows encapsulation of the non-native substrate proteins and provides a physical environment optimized to promote and accelerate protein folding. GroES binds to the apical surface of the GroEL ring, thereby capping the opening of the GroEL channel. This is Co-chaperonin GroES from Shewanella amazonensis (strain ATCC BAA-1098 / SB2B).